Reading from the N-terminus, the 411-residue chain is Protein phosphatase 1 regulatory subunit 36 (411 aa).

In terms of assembly, interacts with PPP1CA.

Its function is as follows. Inhibits phosphatase activity of protein phosphatase 1 (PP1) complexes. This chain is Protein phosphatase 1 regulatory subunit 36 (Ppp1r36), found in Rattus norvegicus (Rat).